We begin with the raw amino-acid sequence, 100 residues long: Urease subunit gamma (100 aa).

Belongs to the urease gamma subunit family. As to quaternary structure, heterotrimer of UreA (gamma), UreB (beta) and UreC (alpha) subunits. Three heterotrimers associate to form the active enzyme.

Its subcellular location is the cytoplasm. It catalyses the reaction urea + 2 H2O + H(+) = hydrogencarbonate + 2 NH4(+). The protein operates within nitrogen metabolism; urea degradation; CO(2) and NH(3) from urea (urease route): step 1/1. This is Urease subunit gamma from Mycobacteroides abscessus (strain ATCC 19977 / DSM 44196 / CCUG 20993 / CIP 104536 / JCM 13569 / NCTC 13031 / TMC 1543 / L948) (Mycobacterium abscessus).